A 336-amino-acid polypeptide reads, in one-letter code: uncharacterized protein (336 aa).

2 disordered regions span residues glycine 29–alanine 93 and leucine 116–glycine 147. Composition is skewed to polar residues over residues serine 70–alanine 82 and proline 125–histidine 141.

This is an uncharacterized protein from Bos taurus (Bovine).